A 180-amino-acid polypeptide reads, in one-letter code: uncharacterized protein (180 aa).

This is an uncharacterized protein from Clostridium acetobutylicum (strain ATCC 824 / DSM 792 / JCM 1419 / IAM 19013 / LMG 5710 / NBRC 13948 / NRRL B-527 / VKM B-1787 / 2291 / W).